The chain runs to 447 residues: Phosphoglucosamine mutase (447 aa).

S103 serves as the catalytic Phosphoserine intermediate. Mg(2+) contacts are provided by S103, D242, D244, and D246. Residue S103 is modified to Phosphoserine.

This sequence belongs to the phosphohexose mutase family. The cofactor is Mg(2+). Post-translationally, activated by phosphorylation.

The catalysed reaction is alpha-D-glucosamine 1-phosphate = D-glucosamine 6-phosphate. Functionally, catalyzes the conversion of glucosamine-6-phosphate to glucosamine-1-phosphate. This chain is Phosphoglucosamine mutase, found in Cereibacter sphaeroides (strain ATCC 17025 / ATH 2.4.3) (Rhodobacter sphaeroides).